The primary structure comprises 769 residues: Probable protease Ga0334635_1659 (769 aa).

The disordered stretch occupies residues 118–167 (VARGSSDNNGAPPLSFTLSHGDPKSDPEPSSPSRLVNTGLSEAERPESPL).

In terms of biological role, probably a dedicated protease for substrate gasdermin bGSDM; cleaves the bGSDM precursor, releasing the pore-forming moiety, which integrates into the membrane and triggers cell death. Involved in defense against bacteriophages. Expression of gasdermin bGSDM and this neighboring protease is toxic in E.coli. The sequence is that of Probable protease Ga0334635_1659 from Vitiosangium sp. (strain GDMCC 1.1324).